A 588-amino-acid chain; its full sequence is uncharacterized protein (588 aa).

An N-terminal signal peptide occupies residues 1 to 19 (MRSTAYLTALLSFLGATHA). 2 N-linked (GlcNAc...) asparagine glycosylation sites follow: N45 and N104. The FAD-binding PCMH-type domain maps to 118 to 303 (GQGRIPLYSA…TSVTLRTFKD (186 aa)). A Pros-8alpha-FAD histidine modification is found at H156. N-linked (GlcNAc...) asparagine glycosylation is found at N179, N312, N320, N351, N370, and N446.

Belongs to the oxygen-dependent FAD-linked oxidoreductase family. FAD is required as a cofactor.

Its subcellular location is the secreted. This is an uncharacterized protein from Arthroderma benhamiae (strain ATCC MYA-4681 / CBS 112371) (Trichophyton mentagrophytes).